A 492-amino-acid chain; its full sequence is 2-succinylbenzoate--CoA ligase (492 aa).

This sequence belongs to the ATP-dependent AMP-binding enzyme family. MenE subfamily.

The enzyme catalyses 2-succinylbenzoate + ATP + CoA = 2-succinylbenzoyl-CoA + AMP + diphosphate. It participates in quinol/quinone metabolism; 1,4-dihydroxy-2-naphthoate biosynthesis; 1,4-dihydroxy-2-naphthoate from chorismate: step 5/7. Its pathway is quinol/quinone metabolism; menaquinone biosynthesis. In terms of biological role, converts 2-succinylbenzoate (OSB) to 2-succinylbenzoyl-CoA (OSB-CoA). The protein is 2-succinylbenzoate--CoA ligase of Staphylococcus aureus (strain MSSA476).